The chain runs to 728 residues: 1,4-alpha-glucan branching enzyme GlgB (728 aa).

Residue D405 is the Nucleophile of the active site. The Proton donor role is filled by E458.

It belongs to the glycosyl hydrolase 13 family. GlgB subfamily. Monomer.

It catalyses the reaction Transfers a segment of a (1-&gt;4)-alpha-D-glucan chain to a primary hydroxy group in a similar glucan chain.. The protein operates within glycan biosynthesis; glycogen biosynthesis. Its function is as follows. Catalyzes the formation of the alpha-1,6-glucosidic linkages in glycogen by scission of a 1,4-alpha-linked oligosaccharide from growing alpha-1,4-glucan chains and the subsequent attachment of the oligosaccharide to the alpha-1,6 position. The polypeptide is 1,4-alpha-glucan branching enzyme GlgB (Salmonella arizonae (strain ATCC BAA-731 / CDC346-86 / RSK2980)).